The following is a 256-amino-acid chain: Floral homeotic protein APETALA 1 (256 aa).

The 61-residue stretch at 1-61 (MGRGRVQLKR…GKLFEYSTDS (61 aa)) folds into the MADS-box domain. One can recognise a K-box domain in the interval 88 to 178 (NTNWSMEYNR…SKQIKEREKV (91 aa)). Positions 180 to 206 (RAQQEQWDQQNHGQNMPPPPPPQEHQI) are disordered.

Homodimer capable of binding to CArG-box sequences.

The protein localises to the nucleus. In terms of biological role, transcription factor that promotes early floral meristem identity in synergy with LEAFY. Displays a redundant function with CAULIFLOWER in the up-regulation of LEAFY. Required subsequently for the transition of an inflorescence meristem into a floral meristem, and for the normal development of sepals and petals in flowers. Regulates positively B class homeotic proteins. The polypeptide is Floral homeotic protein APETALA 1 (AP1) (Brassica rapa subsp. pekinensis (Chinese cabbage)).